A 948-amino-acid chain; its full sequence is Puromycin-sensitive aminopeptidase (948 aa).

Residues glutamate 206 and 341-345 contribute to the substrate site; that span reads GAMEN. Histidine 377 contributes to the Zn(2+) binding site. The Proton acceptor role is filled by glutamate 378. The Zn(2+) site is built by histidine 381 and glutamate 400.

This sequence belongs to the peptidase M1 family. Zn(2+) serves as cofactor. Expressed mainly in intestinal cells in the posterior part of the intestine and in amphid sensory neurons and nerve ring neurons. Expressed in neurons in the male tail. Expressed in mature spermatids (at protein level).

The protein localises to the cytoplasm. The protein resides in the cell cortex. Its subcellular location is the chromosome. It localises to the cytoskeleton. It is found in the spindle pole. It catalyses the reaction Release of an N-terminal amino acid, preferentially alanine, from a wide range of peptides, amides and arylamides.. With respect to regulation, inhibited by chelating agent 1,10-phenanthroline, aminopeptidase inhibitors actinonin, amastatin, and leuhistin, and to a lesser extent by puromycin. In terms of biological role, aminopeptidase. Required for the exit from meiosis, probably upstream of cyclin cyb-3. Involved in the establishment of the anterior-posterior polarity at the embryonic 1-cell stage by regulating the dynamics of sperm-donated centrosomes. Plays a role in oocyte maturation. Required for embryonic development. The protein is Puromycin-sensitive aminopeptidase of Caenorhabditis elegans.